We begin with the raw amino-acid sequence, 355 residues long: Elongation factor Ts (355 aa).

An involved in Mg(2+) ion dislocation from EF-Tu region spans residues 82 to 85 (TDFV).

This sequence belongs to the EF-Ts family.

The protein localises to the cytoplasm. Functionally, associates with the EF-Tu.GDP complex and induces the exchange of GDP to GTP. It remains bound to the aminoacyl-tRNA.EF-Tu.GTP complex up to the GTP hydrolysis stage on the ribosome. This Helicobacter pylori (strain ATCC 700392 / 26695) (Campylobacter pylori) protein is Elongation factor Ts (tsf).